A 43-amino-acid chain; its full sequence is Neurotrophin-4 (43 aa).

This sequence belongs to the NGF-beta family.

Functionally, NT-4 could play a role in oogenesis and/or early embryogenesis. NT-4 interacts with the low affinity NGF receptor and elicits neurite outgrowth from explanted dorsal root ganglia with no and lower activity in sympathetic and nodose ganglia, respectively. This is Neurotrophin-4 (NTF4) from Macrovipera lebetinus (Levantine viper).